Here is a 248-residue protein sequence, read N- to C-terminus: 2,3-bisphosphoglycerate-dependent phosphoglycerate mutase (248 aa).

Residues 8–15 (RHGESTWN), 21–22 (TG), R60, 87–90 (ERHY), K98, 114–115 (RR), and 183–184 (GN) each bind substrate. The Tele-phosphohistidine intermediate role is filled by H9. The Proton donor/acceptor role is filled by E87.

Belongs to the phosphoglycerate mutase family. BPG-dependent PGAM subfamily. Homodimer.

It catalyses the reaction (2R)-2-phosphoglycerate = (2R)-3-phosphoglycerate. The protein operates within carbohydrate degradation; glycolysis; pyruvate from D-glyceraldehyde 3-phosphate: step 3/5. Catalyzes the interconversion of 2-phosphoglycerate and 3-phosphoglycerate. This Paraburkholderia phytofirmans (strain DSM 17436 / LMG 22146 / PsJN) (Burkholderia phytofirmans) protein is 2,3-bisphosphoglycerate-dependent phosphoglycerate mutase.